Here is a 257-residue protein sequence, read N- to C-terminus: Major prion protein (257 aa).

A signal peptide spans 1–24 (MVKSHIGGWILVLFVAAWSDIGLC). The interval 25 to 234 (KKRPKPGGGW…EYEAYAQRGA (210 aa)) is interaction with GRB2, ERI3 and SYN1. The tract at residues 28–113 (PKPGGGWNTG…NKPSKPKTNM (86 aa)) is disordered. 5 consecutive repeat copies span residues 54 to 62 (PQGGGGWGQ), 63 to 70 (PHGGGWGQ), 71 to 78 (PHGGGWGQ), 79 to 86 (PHGGGWGQ), and 87 to 95 (PHGGGGWGQ). The segment at 54-95 (PQGGGGWGQPHGGGWGQPHGGGWGQPHGGGWGQPHGGGGWGQ) is 5 X 8 AA tandem repeats of P-H-G-G-G-W-G-Q. Residues 55-100 (QGGGGWGQPHGGGWGQPHGGGWGQPHGGGWGQPHGGGGWGQGGGSH) are compositionally biased toward gly residues. Cu(2+) is bound by residues His64, Gly65, Gly66, His72, Gly73, Gly74, His80, Gly81, Gly82, His88, Gly90, and Gly91. An intrachain disulfide couples Cys183 to Cys218. N-linked (GlcNAc...) asparagine glycosylation is found at Asn185 and Asn201. Residue Ala234 is the site of GPI-anchor amidated alanine attachment. Positions 235 to 257 (SVILFSSPPVILLISFLLFLIVG) are cleaved as a propeptide — removed in mature form.

The protein belongs to the prion family. In terms of assembly, monomer and homodimer. Has a tendency to aggregate into amyloid fibrils containing a cross-beta spine, formed by a steric zipper of superposed beta-strands. Soluble oligomers may represent an intermediate stage on the path to fibril formation. Copper binding may promote oligomerization. Interacts with GRB2, APP, ERI3/PRNPIP and SYN1. Mislocalized cytosolically exposed PrP interacts with MGRN1; this interaction alters MGRN1 subcellular location and causes lysosomal enlargement. Interacts with KIAA1191.

The protein resides in the cell membrane. It localises to the golgi apparatus. Functionally, its primary physiological function is unclear. Has cytoprotective activity against internal or environmental stresses. May play a role in neuronal development and synaptic plasticity. May be required for neuronal myelin sheath maintenance. May play a role in iron uptake and iron homeostasis. Soluble oligomers are toxic to cultured neuroblastoma cells and induce apoptosis (in vitro). Association with GPC1 (via its heparan sulfate chains) targets PRNP to lipid rafts. Also provides Cu(2+) or Zn(2+) for the ascorbate-mediated GPC1 deaminase degradation of its heparan sulfate side chains. The chain is Major prion protein (PRNP) from Sus scrofa (Pig).